The chain runs to 190 residues: Pyridoxal 5'-phosphate synthase subunit PdxT (190 aa).

46 to 48 (GES) lines the L-glutamine pocket. C78 acts as the Nucleophile in catalysis. L-glutamine is bound by residues R108 and 137–138 (IR). Catalysis depends on charge relay system residues H174 and E176.

The protein belongs to the glutaminase PdxT/SNO family. In terms of assembly, in the presence of PdxS, forms a dodecamer of heterodimers. Only shows activity in the heterodimer.

The catalysed reaction is aldehydo-D-ribose 5-phosphate + D-glyceraldehyde 3-phosphate + L-glutamine = pyridoxal 5'-phosphate + L-glutamate + phosphate + 3 H2O + H(+). The enzyme catalyses L-glutamine + H2O = L-glutamate + NH4(+). The protein operates within cofactor biosynthesis; pyridoxal 5'-phosphate biosynthesis. Functionally, catalyzes the hydrolysis of glutamine to glutamate and ammonia as part of the biosynthesis of pyridoxal 5'-phosphate. The resulting ammonia molecule is channeled to the active site of PdxS. This Chloroflexus aggregans (strain MD-66 / DSM 9485) protein is Pyridoxal 5'-phosphate synthase subunit PdxT.